The following is a 150-amino-acid chain: Deoxyuridine 5'-triphosphate nucleotidohydrolase (150 aa).

Substrate is bound by residues 69–71 (RSG), N82, 86–88 (LID), and K96.

It belongs to the dUTPase family. It depends on Mg(2+) as a cofactor.

It catalyses the reaction dUTP + H2O = dUMP + diphosphate + H(+). The protein operates within pyrimidine metabolism; dUMP biosynthesis; dUMP from dCTP (dUTP route): step 2/2. Its function is as follows. This enzyme is involved in nucleotide metabolism: it produces dUMP, the immediate precursor of thymidine nucleotides and it decreases the intracellular concentration of dUTP so that uracil cannot be incorporated into DNA. The polypeptide is Deoxyuridine 5'-triphosphate nucleotidohydrolase (Neisseria meningitidis serogroup A / serotype 4A (strain DSM 15465 / Z2491)).